The chain runs to 658 residues: Threonine--tRNA ligase (658 aa).

Residues 1-64 (MSNTVSLQFP…GASGKVEIIT (64 aa)) form the TGS domain. Residues 246-548 (DHRRLGREMD…LIENFAGHMP (303 aa)) are catalytic. Positions 343, 394, and 525 each coordinate Zn(2+).

The protein belongs to the class-II aminoacyl-tRNA synthetase family. Homodimer. Zn(2+) serves as cofactor.

Its subcellular location is the cytoplasm. It carries out the reaction tRNA(Thr) + L-threonine + ATP = L-threonyl-tRNA(Thr) + AMP + diphosphate + H(+). Its function is as follows. Catalyzes the attachment of threonine to tRNA(Thr) in a two-step reaction: L-threonine is first activated by ATP to form Thr-AMP and then transferred to the acceptor end of tRNA(Thr). Also edits incorrectly charged L-seryl-tRNA(Thr). This is Threonine--tRNA ligase from Brucella melitensis biotype 2 (strain ATCC 23457).